A 213-amino-acid polypeptide reads, in one-letter code: MKKVLITAFEPFDGERINPSWEAVSRLHNRLIGGAEIVAKRLPCAFGTSLEVLYATIDAVKPDLVIAVGQAGGRADMSIERVAINVDDARIPDNAGAQPIDEPVLSGGPAALFSTLPIKALVAGIREAGIPASVSQTAGTFVCNHVMYGLLHYLRRRKARGGFIHIPYLPEQAINHPGAPSMALATVILALEMAVSISLAVEEDMRLAGGATH.

Catalysis depends on residues E80, C143, and H165.

This sequence belongs to the peptidase C15 family. Homotetramer.

It is found in the cytoplasm. The enzyme catalyses Release of an N-terminal pyroglutamyl group from a polypeptide, the second amino acid generally not being Pro.. Its function is as follows. Removes 5-oxoproline from various penultimate amino acid residues except L-proline. The sequence is that of Pyrrolidone-carboxylate peptidase from Erwinia tasmaniensis (strain DSM 17950 / CFBP 7177 / CIP 109463 / NCPPB 4357 / Et1/99).